The following is a 137-amino-acid chain: Transcription antitermination protein NusB (137 aa).

Belongs to the NusB family.

Involved in transcription antitermination. Required for transcription of ribosomal RNA (rRNA) genes. Binds specifically to the boxA antiterminator sequence of the ribosomal RNA (rrn) operons. This Proteus mirabilis (strain HI4320) protein is Transcription antitermination protein NusB.